We begin with the raw amino-acid sequence, 28 residues long: Flagellar filament 34 kDa core protein (28 aa).

It belongs to the bacterial flagellin family. As to quaternary structure, the flagellum consists of an outer layer composed of repeating units of FlaA around a core that contains several antigenically related polypeptides.

The protein localises to the periplasmic flagellum. Its subcellular location is the periplasm. Its function is as follows. Component of the core of the flagella. The protein is Flagellar filament 34 kDa core protein of Treponema phagedenis.